A 141-amino-acid chain; its full sequence is Large ribosomal subunit protein uL16 (141 aa).

The protein belongs to the universal ribosomal protein uL16 family. Part of the 50S ribosomal subunit.

In terms of biological role, binds 23S rRNA and is also seen to make contacts with the A and possibly P site tRNAs. The sequence is that of Large ribosomal subunit protein uL16 from Campylobacter hominis (strain ATCC BAA-381 / DSM 21671 / CCUG 45161 / LMG 19568 / NCTC 13146 / CH001A).